The sequence spans 459 residues: Putrescine aminotransferase (459 aa).

Pyridoxal 5'-phosphate is bound by residues 150–151 (GT) and Q274. K300 is subject to N6-(pyridoxal phosphate)lysine. Pyridoxal 5'-phosphate is bound at residue T332.

This sequence belongs to the class-III pyridoxal-phosphate-dependent aminotransferase family. Putrescine aminotransferase subfamily. Pyridoxal 5'-phosphate serves as cofactor.

It catalyses the reaction an alkane-alpha,omega-diamine + 2-oxoglutarate = an omega-aminoaldehyde + L-glutamate. The enzyme catalyses putrescine + 2-oxoglutarate = 1-pyrroline + L-glutamate + H2O. It carries out the reaction cadaverine + 2-oxoglutarate = 5-aminopentanal + L-glutamate. It participates in amine and polyamine degradation; putrescine degradation; 4-aminobutanal from putrescine (transaminase route): step 1/1. In terms of biological role, catalyzes the aminotransferase reaction from putrescine to 2-oxoglutarate, leading to glutamate and 4-aminobutanal, which spontaneously cyclizes to form 1-pyrroline. This is the first step in one of two pathways for putrescine degradation, where putrescine is converted into 4-aminobutanoate (gamma-aminobutyrate or GABA) via 4-aminobutanal. Also functions as a cadaverine transaminase in a a L-lysine degradation pathway to succinate that proceeds via cadaverine, glutarate and L-2-hydroxyglutarate. The chain is Putrescine aminotransferase from Salmonella agona (strain SL483).